The sequence spans 134 residues: FK506-binding protein 2 (134 aa).

The signal sequence occupies residues 1 to 19 (MRFSIFSTLLVSLATLSTA). The PPIase FKBP-type domain occupies 39-127 (GDTVQMHYKG…IFETELVGID (89 aa)). Residues 131-134 (KDEL) carry the Prevents secretion from ER motif.

Belongs to the FKBP-type PPIase family. FKBP2 subfamily.

It localises to the endoplasmic reticulum. The enzyme catalyses [protein]-peptidylproline (omega=180) = [protein]-peptidylproline (omega=0). Inhibited by both FK506 and rapamycin. Its function is as follows. PPIases accelerate the folding of proteins. It catalyzes the cis-trans isomerization of proline imidic peptide bonds in oligopeptides. This chain is FK506-binding protein 2 (fpr2), found in Aspergillus oryzae (strain ATCC 42149 / RIB 40) (Yellow koji mold).